A 343-amino-acid chain; its full sequence is Zinc finger protein STP3 (343 aa).

Disordered stretches follow at residues 31–56 (YNGE…SGSA) and 71–140 (SNDV…KPRK). The span at 33–45 (GEASSASTHPTLP) shows a compositional bias: polar residues. 3 stretches are compositionally biased toward low complexity: residues 46–56 (NMNISNGSGSA), 71–86 (SNDV…FLPS), and 94–120 (SASA…AGPS). A phosphoserine mark is found at S71 and S111. Residues 169 to 191 (HKCPICHRGFARNNDLLRHKKRH) form a C2H2-type zinc finger. Residues 198–222 (SQSGVLSNHNDGKGGSVSPNDDDTH) form a disordered region.

The protein resides in the nucleus. This is Zinc finger protein STP3 (STP3) from Saccharomyces cerevisiae (strain ATCC 204508 / S288c) (Baker's yeast).